The primary structure comprises 205 residues: GTP cyclohydrolase-2 (205 aa).

Position 49–53 (49–53 (RIHSE)) interacts with GTP. Residues Cys54, Cys65, and Cys67 each contribute to the Zn(2+) site. Residues Gln70, 92–94 (EGR), and Thr114 contribute to the GTP site. Asp126 acts as the Proton acceptor in catalysis. Arg128 serves as the catalytic Nucleophile. GTP contacts are provided by Thr149 and Lys154.

It belongs to the GTP cyclohydrolase II family. Zn(2+) is required as a cofactor.

It catalyses the reaction GTP + 4 H2O = 2,5-diamino-6-hydroxy-4-(5-phosphoribosylamino)-pyrimidine + formate + 2 phosphate + 3 H(+). Its pathway is cofactor biosynthesis; riboflavin biosynthesis; 5-amino-6-(D-ribitylamino)uracil from GTP: step 1/4. In terms of biological role, catalyzes the conversion of GTP to 2,5-diamino-6-ribosylamino-4(3H)-pyrimidinone 5'-phosphate (DARP), formate and pyrophosphate. The chain is GTP cyclohydrolase-2 from Shewanella denitrificans (strain OS217 / ATCC BAA-1090 / DSM 15013).